We begin with the raw amino-acid sequence, 120 residues long: UPF0231 protein ETA_08290 (120 aa).

Belongs to the UPF0231 family.

This Erwinia tasmaniensis (strain DSM 17950 / CFBP 7177 / CIP 109463 / NCPPB 4357 / Et1/99) protein is UPF0231 protein ETA_08290.